The primary structure comprises 82 residues: Probable glutamyl-tRNA(Gln) amidotransferase subunit C (82 aa).

It belongs to the GatC family. In terms of assembly, heterotrimer of A, B and C subunits.

The enzyme catalyses L-glutamyl-tRNA(Gln) + L-glutamine + ATP + H2O = L-glutaminyl-tRNA(Gln) + L-glutamate + ADP + phosphate + H(+). It carries out the reaction L-aspartyl-tRNA(Asn) + L-glutamine + ATP + H2O = L-asparaginyl-tRNA(Asn) + L-glutamate + ADP + phosphate + 2 H(+). Functionally, allows the formation of correctly charged Asn-tRNA(Asn) or Gln-tRNA(Gln) through the transamidation of misacylated Asp-tRNA(Asn) or Glu-tRNA(Gln) in organisms which lack either or both of asparaginyl-tRNA or glutaminyl-tRNA synthetases. The reaction takes place in the presence of glutamine and ATP through an activated phospho-Asp-tRNA(Asn) or phospho-Glu-tRNA(Gln). In Methanocaldococcus jannaschii (strain ATCC 43067 / DSM 2661 / JAL-1 / JCM 10045 / NBRC 100440) (Methanococcus jannaschii), this protein is Probable glutamyl-tRNA(Gln) amidotransferase subunit C.